Consider the following 191-residue polypeptide: Putative manganese efflux pump MntP (191 aa).

6 helical membrane-spanning segments follow: residues 3 to 23 (PISI…AAIG), 37 to 57 (LRAG…GWLL), 65 to 85 (VEAF…IHMI), 107 to 129 (WKLA…GLAF), 144 to 164 (CTLT…SMVG), and 169 to 189 (IIGG…HLHG).

This sequence belongs to the MntP (TC 9.B.29) family.

The protein localises to the cell inner membrane. Probably functions as a manganese efflux pump. The polypeptide is Putative manganese efflux pump MntP (Stenotrophomonas maltophilia (strain R551-3)).